A 175-amino-acid chain; its full sequence is Pycsar effector protein RsPycTM (175 aa).

3 consecutive transmembrane segments (helical) span residues 17–37 (AKNA…ITLL), 44–64 (PLGF…AAII), and 146–166 (AGSL…LFCI).

The protein resides in the cell inner membrane. Functionally, pycsar (pyrimidine cyclase system for antiphage resistance) provides immunity against bacteriophage. The pyrimidine cyclase (PycC) synthesizes cyclic nucleotides in response to infection; these serve as specific second messenger signals. The signals activate the nearby effector, leading to bacterial cell death and abortive phage infection. A clade A Pycsar system. Its function is as follows. The effector gene of a two-gene Pycsar system. Expression of this and uridylate cyclase RsPycC (AC A0A4R2TZQ0) probably confers resistance to bacteriophage. The genes are probably only expressed in response to bacteriophage infection. Probably only responds to cUMP (produced by its cognate NTP cyclase), acts by impairing membrane integrity. In Rhizobium sp. (strain PP-F2F-G36), this protein is Pycsar effector protein RsPycTM.